Consider the following 145-residue polypeptide: MMDVNEIREYLPHRYPFLLVDRVVELVEGESIIAYKNITVNEEVFNGHFPQNPVFPGVMILEAMAQASGILGFKTMGKKPEDGSIYLFAGVDDVRFKRQVVPGDRLQLESRVISEKRGIWKFECKATVDGVLAASATILCADRKV.

Histidine 48 is a catalytic residue.

It belongs to the thioester dehydratase family. FabZ subfamily.

It localises to the cytoplasm. The enzyme catalyses a (3R)-hydroxyacyl-[ACP] = a (2E)-enoyl-[ACP] + H2O. Functionally, involved in unsaturated fatty acids biosynthesis. Catalyzes the dehydration of short chain beta-hydroxyacyl-ACPs and long chain saturated and unsaturated beta-hydroxyacyl-ACPs. The polypeptide is 3-hydroxyacyl-[acyl-carrier-protein] dehydratase FabZ (Cellvibrio japonicus (strain Ueda107) (Pseudomonas fluorescens subsp. cellulosa)).